The primary structure comprises 321 residues: Lipoyl synthase (321 aa).

Positions 68, 73, 79, 94, 98, 101, and 308 each coordinate [4Fe-4S] cluster. The 218-residue stretch at 80–297 (FNHGTATFMI…KELAESIGFT (218 aa)) folds into the Radical SAM core domain.

It belongs to the radical SAM superfamily. Lipoyl synthase family. [4Fe-4S] cluster serves as cofactor.

It localises to the cytoplasm. It carries out the reaction [[Fe-S] cluster scaffold protein carrying a second [4Fe-4S](2+) cluster] + N(6)-octanoyl-L-lysyl-[protein] + 2 oxidized [2Fe-2S]-[ferredoxin] + 2 S-adenosyl-L-methionine + 4 H(+) = [[Fe-S] cluster scaffold protein] + N(6)-[(R)-dihydrolipoyl]-L-lysyl-[protein] + 4 Fe(3+) + 2 hydrogen sulfide + 2 5'-deoxyadenosine + 2 L-methionine + 2 reduced [2Fe-2S]-[ferredoxin]. Its pathway is protein modification; protein lipoylation via endogenous pathway; protein N(6)-(lipoyl)lysine from octanoyl-[acyl-carrier-protein]: step 2/2. Functionally, catalyzes the radical-mediated insertion of two sulfur atoms into the C-6 and C-8 positions of the octanoyl moiety bound to the lipoyl domains of lipoate-dependent enzymes, thereby converting the octanoylated domains into lipoylated derivatives. This chain is Lipoyl synthase, found in Shewanella halifaxensis (strain HAW-EB4).